Consider the following 361-residue polypeptide: Porphobilinogen deaminase (361 aa).

An N-acetylserine modification is found at serine 2. Serine 69 is subject to Phosphoserine. Position 74 is an N6-acetyllysine (lysine 74). Serine 147 is modified (phosphoserine). S-(dipyrrolylmethanemethyl)cysteine is present on cysteine 261.

It belongs to the HMBS family. As to quaternary structure, monomer. It depends on dipyrromethane as a cofactor.

Its subcellular location is the cytoplasm. It is found in the cytosol. The enzyme catalyses 4 porphobilinogen + H2O = hydroxymethylbilane + 4 NH4(+). The protein operates within porphyrin-containing compound metabolism; protoporphyrin-IX biosynthesis; coproporphyrinogen-III from 5-aminolevulinate: step 2/4. Functionally, as part of the heme biosynthetic pathway, catalyzes the sequential polymerization of four molecules of porphobilinogen to form hydroxymethylbilane, also known as preuroporphyrinogen. Catalysis begins with the assembly of the dipyrromethane cofactor by the apoenzyme from two molecules of porphobilinogen or from preuroporphyrinogen. The covalently linked cofactor acts as a primer, around which the tetrapyrrole product is assembled. In the last step of catalysis, the product, preuroporphyrinogen, is released, leaving the cofactor bound to the holodeaminase intact. The polypeptide is Porphobilinogen deaminase (HMBS) (Bos taurus (Bovine)).